We begin with the raw amino-acid sequence, 221 residues long: Ribosome maturation factor RimM (221 aa).

The interval 1–23 (MTERKQGAAAPRPLNRPQGESPK) is disordered. The region spanning 144-221 (ENEFYWVDLI…RIVVDWGLDY (78 aa)) is the PRC barrel domain.

Belongs to the RimM family. Binds ribosomal protein uS19.

The protein resides in the cytoplasm. Its function is as follows. An accessory protein needed during the final step in the assembly of 30S ribosomal subunit, possibly for assembly of the head region. Essential for efficient processing of 16S rRNA. May be needed both before and after RbfA during the maturation of 16S rRNA. It has affinity for free ribosomal 30S subunits but not for 70S ribosomes. This chain is Ribosome maturation factor RimM, found in Cupriavidus pinatubonensis (strain JMP 134 / LMG 1197) (Cupriavidus necator (strain JMP 134)).